The sequence spans 433 residues: GTPase Obg (433 aa).

The region spanning 1–159 (MKFVDSADLI…FEIRAELKVL (159 aa)) is the Obg domain. One can recognise an OBG-type G domain in the interval 160-332 (ADVGFVGLPN…LLFMIYEELK (173 aa)). Residues 166–173 (GLPNAGKS), 191–195 (FTTIT), 213–216 (DLPG), 284–287 (NKMD), and 313–315 (SGL) contribute to the GTP site. Ser173 and Thr193 together coordinate Mg(2+). In terms of domain architecture, OCT spans 355 to 433 (KFEEQKEDIQ…VFDYELEWTD (79 aa)).

Belongs to the TRAFAC class OBG-HflX-like GTPase superfamily. OBG GTPase family. Monomer. Mg(2+) is required as a cofactor.

The protein resides in the cytoplasm. An essential GTPase which binds GTP, GDP and possibly (p)ppGpp with moderate affinity, with high nucleotide exchange rates and a fairly low GTP hydrolysis rate. Plays a role in control of the cell cycle, stress response, ribosome biogenesis and in those bacteria that undergo differentiation, in morphogenesis control. The chain is GTPase Obg from Mycoplasma mycoides subsp. mycoides SC (strain CCUG 32753 / NCTC 10114 / PG1).